Here is a 945-residue protein sequence, read N- to C-terminus: Glutamyl aminopeptidase (945 aa).

Topologically, residues 1–18 are cytoplasmic; the sequence is MNFAEEEPSKKYCIKGKH. A helical; Signal-anchor for type II membrane protein membrane pass occupies residues 19 to 39; the sequence is VAIICGVVVAVGLIVGLSVGL. The Extracellular portion of the chain corresponds to 40 to 945; it reads TRSCEQDTTP…SIREWFASLP (906 aa). Positions 43 to 77 are disordered; it reads CEQDTTPAPSQPPPEASTALPPQDQNVCPDSEDES. 2 N-linked (GlcNAc...) asparagine glycosylation sites follow: N116 and N189. E215 lines the substrate pocket. N-linked (GlcNAc...) asparagine glycosylation occurs at N316. 349–353 contributes to the substrate binding site; sequence GAMEN. Residue H385 coordinates Zn(2+). Catalysis depends on E386, which acts as the Proton acceptor. The Zn(2+) site is built by H389 and E408. N-linked (GlcNAc...) asparagine glycosylation is found at N546, N601, N637, N669, N754, and N792. R878 contacts substrate.

Belongs to the peptidase M1 family. In terms of assembly, homodimer; disulfide-linked. It depends on Zn(2+) as a cofactor. In terms of tissue distribution, early B-lineage cells and certain stromal cell of hemopoietic tissues. Also expressed by capillary endothelial cells, placenta, and epithelial cells of the intestine and proximal renal tubules.

It is found in the cell membrane. It carries out the reaction Release of N-terminal glutamate (and to a lesser extent aspartate) from a peptide.. Substrate specificity is modulated by calcium which enhances the enzymatic activity for cleavage of acidic residues while reducing its activity with basic residues. Inhibited by aminopeptidase inhibitors amastatin and bestatin. Its function is as follows. Regulates central hypertension through its calcium-modulated preference to cleave N-terminal acidic residues from peptides such as angiotensin II. In Mus musculus (Mouse), this protein is Glutamyl aminopeptidase (Enpep).